Consider the following 577-residue polypeptide: Arginine--tRNA ligase (577 aa).

Positions 122-132 match the 'HIGH' region motif; that stretch reads PNVAKEMHVGH.

It belongs to the class-I aminoacyl-tRNA synthetase family. In terms of assembly, monomer.

The protein localises to the cytoplasm. The enzyme catalyses tRNA(Arg) + L-arginine + ATP = L-arginyl-tRNA(Arg) + AMP + diphosphate. This is Arginine--tRNA ligase from Escherichia coli O6:K15:H31 (strain 536 / UPEC).